Here is a 274-residue protein sequence, read N- to C-terminus: Protein YehF (274 aa).

Residues 2–78 enclose the WGR domain; sequence RHFIYQDEKS…KDNSLQPSQT (77 aa).

Has been implicated in selenate reduction; a mini-Tn10 insertion mutant in 'molR', (which was mapped to 47.3 centisomes i.e. this locus), is defective in the reduction of selenate. The sequence is that of Protein YehF (yehF) from Escherichia coli (strain K12).